Here is a 267-residue protein sequence, read N- to C-terminus: MKENRITRLVKQDKKLLIAYYMPEFPVPGATLPVLEALQESGVDLIELGMPYSDPIGDGSVIQDAAHKAISHGVHVGSIFELVRRARNGEGCKKITTPILLMGYCNPLIAYGGDCFMADAVKAGVDGLLIPDLPPEESEDFLERAKHFGLSVIYLISPVTPPDRIELIDSMSTDFSYCLAVNATTGTGKLDVAGMDEKIAEYLKRVRQHTKKKFVVGFGIKDRERVRKMWELADGAVVGSALLQHVATAKTPEETAELAAGFWKSLR.

Active-site proton acceptor residues include glutamate 47 and aspartate 58.

Belongs to the TrpA family. Tetramer of two alpha and two beta chains.

It catalyses the reaction (1S,2R)-1-C-(indol-3-yl)glycerol 3-phosphate + L-serine = D-glyceraldehyde 3-phosphate + L-tryptophan + H2O. Its pathway is amino-acid biosynthesis; L-tryptophan biosynthesis; L-tryptophan from chorismate: step 5/5. The alpha subunit is responsible for the aldol cleavage of indoleglycerol phosphate to indole and glyceraldehyde 3-phosphate. The protein is Tryptophan synthase alpha chain of Chlorobaculum tepidum (strain ATCC 49652 / DSM 12025 / NBRC 103806 / TLS) (Chlorobium tepidum).